Consider the following 262-residue polypeptide: Global transcriptional regulator CodY (262 aa).

The tract at residues 1–159 (MATLLEKTRK…ATTVIGVQLS (159 aa)) is GAF domain. Residues 207 to 226 (ASVIADKIGITRSVIVNALR) constitute a DNA-binding region (H-T-H motif).

The protein belongs to the CodY family.

The protein resides in the cytoplasm. In terms of biological role, DNA-binding global transcriptional regulator which is involved in the adaptive response to starvation and acts by directly or indirectly controlling the expression of numerous genes in response to nutrient availability. During rapid exponential growth, CodY is highly active and represses genes whose products allow adaptation to nutrient depletion. This chain is Global transcriptional regulator CodY, found in Lactococcus lactis subsp. lactis (strain IL1403) (Streptococcus lactis).